The sequence spans 258 residues: UDP-2,3-diacylglucosamine hydrolase (258 aa).

Positions 15, 17, 48, 88, and 123 each coordinate Mn(2+). Substrate is bound at residue N88–R89. Substrate contacts are provided by D131, S169, N173, K176, and H204. The Mn(2+) site is built by H204 and H206.

This sequence belongs to the LpxH family. The cofactor is Mn(2+).

The protein resides in the cell inner membrane. It carries out the reaction UDP-2-N,3-O-bis[(3R)-3-hydroxytetradecanoyl]-alpha-D-glucosamine + H2O = 2-N,3-O-bis[(3R)-3-hydroxytetradecanoyl]-alpha-D-glucosaminyl 1-phosphate + UMP + 2 H(+). It participates in glycolipid biosynthesis; lipid IV(A) biosynthesis; lipid IV(A) from (3R)-3-hydroxytetradecanoyl-[acyl-carrier-protein] and UDP-N-acetyl-alpha-D-glucosamine: step 4/6. Its function is as follows. Hydrolyzes the pyrophosphate bond of UDP-2,3-diacylglucosamine to yield 2,3-diacylglucosamine 1-phosphate (lipid X) and UMP by catalyzing the attack of water at the alpha-P atom. Involved in the biosynthesis of lipid A, a phosphorylated glycolipid that anchors the lipopolysaccharide to the outer membrane of the cell. In Bordetella bronchiseptica (strain ATCC BAA-588 / NCTC 13252 / RB50) (Alcaligenes bronchisepticus), this protein is UDP-2,3-diacylglucosamine hydrolase.